Consider the following 1007-residue polypeptide: Beta-galactosidase A (1007 aa).

The N-terminal stretch at 1–18 is a signal peptide; the sequence is MKLSSACAIALLAAQAAG. Substrate-binding positions include Tyr96 and 140-142; that span reads NAE. A glycan (N-linked (GlcNAc...) asparagine) is linked at Asn156. Asn199 provides a ligand contact to substrate. Glu200 (proton donor) is an active-site residue. Intrachain disulfides connect Cys205–Cys206 and Cys266–Cys315. Glu298 acts as the Nucleophile in catalysis. Tyr364 contributes to the substrate binding site. N-linked (GlcNAc...) asparagine glycosylation is found at Asn402, Asn422, Asn478, Asn522, Asn622, Asn739, Asn760, Asn777, Asn805, and Asn914.

It belongs to the glycosyl hydrolase 35 family.

The protein localises to the secreted. It catalyses the reaction Hydrolysis of terminal non-reducing beta-D-galactose residues in beta-D-galactosides.. In terms of biological role, cleaves beta-linked terminal galactosyl residues from gangliosides, glycoproteins, and glycosaminoglycans. This is Beta-galactosidase A (lacA) from Aspergillus niger (strain ATCC MYA-4892 / CBS 513.88 / FGSC A1513).